Reading from the N-terminus, the 345-residue chain is MKLGELAAHLGCPVEGNPDVEIRGLASIQQAGPGELSFIESEKYARFIKLTRAEALILDWRTPVSKVPCIRSEQPRLTFAHALELFYQPRRPAPGIHPTAILGANVQLGENVHLGAYVVIGDDVTIGPEAVIYPNCTIYNDVRIGVRTVVHANCVLHERTKIGDECIVQSGAVVGGEGFGFVPTPEGTWHKMPQSGYVRVEDQVEIGSNAAIDRPSVGFTHIGRGTKIDNLVMVGHGCEIGEHCLLVGQVGLAGGVKLGRNVVLAGQVGVAGHAAIGDRTVVSAQSGIPSDVEPGTVVSGSPALPHALWLRTSALIRRLPELFQNLRDLQRKVALLQQRLDSGHH.

His-236 functions as the Proton acceptor in the catalytic mechanism.

Belongs to the transferase hexapeptide repeat family. LpxD subfamily. Homotrimer.

It catalyses the reaction a UDP-3-O-[(3R)-3-hydroxyacyl]-alpha-D-glucosamine + a (3R)-hydroxyacyl-[ACP] = a UDP-2-N,3-O-bis[(3R)-3-hydroxyacyl]-alpha-D-glucosamine + holo-[ACP] + H(+). Its pathway is bacterial outer membrane biogenesis; LPS lipid A biosynthesis. Its function is as follows. Catalyzes the N-acylation of UDP-3-O-acylglucosamine using 3-hydroxyacyl-ACP as the acyl donor. Is involved in the biosynthesis of lipid A, a phosphorylated glycolipid that anchors the lipopolysaccharide to the outer membrane of the cell. The sequence is that of UDP-3-O-acylglucosamine N-acyltransferase 3 from Gloeobacter violaceus (strain ATCC 29082 / PCC 7421).